The following is a 400-amino-acid chain: TBC1 domain family member 13 (400 aa).

Residues 35 to 345 (PCEGGLRCLC…RIWDSLFADG (311 aa)) enclose the Rab-GAP TBC domain.

As to quaternary structure, interacts with RAB1A and RAB10; in a GTP-dependent manner. In terms of tissue distribution, expressed in adipocytes.

It localises to the membrane. It is found in the cytoplasm. Its function is as follows. Acts as a GTPase-activating protein for RAB35. Together with RAB35 may be involved in regulation of insulin-induced glucose transporter SLC2A4/GLUT4 translocation to the plasma membrane in adipocytes. The chain is TBC1 domain family member 13 (Tbc1d13) from Mus musculus (Mouse).